Reading from the N-terminus, the 214-residue chain is Large ribosomal subunit protein uL16 (214 aa).

Citrulline is present on R32. A Glycyl lysine isopeptide (Lys-Gly) (interchain with G-Cter in SUMO2) cross-link involves residue K175. K188 is covalently cross-linked (Glycyl lysine isopeptide (Lys-Gly) (interchain with G-Cter in ubiquitin)).

It belongs to the universal ribosomal protein uL16 family. As to quaternary structure, component of the large ribosomal subunit. Mature ribosomes consist of a small (40S) and a large (60S) subunit. The 40S subunit contains about 33 different proteins and 1 molecule of RNA (18S). The 60S subunit contains about 49 different proteins and 3 molecules of RNA (28S, 5.8S and 5S). Post-translationally, citrullinated by PADI4. In terms of processing, ufmylated by UFL1.

Its subcellular location is the cytoplasm. In terms of biological role, component of the large ribosomal subunit. Plays a role in the formation of actively translating ribosomes. May play a role in the embryonic brain development. In Pongo abelii (Sumatran orangutan), this protein is Large ribosomal subunit protein uL16.